A 234-amino-acid chain; its full sequence is MTERNTSTDSPEKRAAGIAAAGLVSSGMLVGLGTGSTVAYTIKELGRRVREEGLDILGVVTSYQSEMLAIEAGIRLTTLAQHPELDLAIDGADQIDSELRAIKGGGAAHTREKIVSVSARRFVVVADESKTSKQLDKLVPVEVLPFAKEPVVKKIRELGGKPQLRSAVKKDGPVITDNGNFVLDVEFGVIKDPEALALQLSSIPGVVEHGIFCNVSELYIGNKDGAIKIITRQK.

Substrate is bound by residues 34–37, 90–93, and 103–106; these read TGST, DGAD, and KGGG. The active-site Proton acceptor is the glutamate 112. Lysine 130 is a substrate binding site.

This sequence belongs to the ribose 5-phosphate isomerase family. Homodimer.

The catalysed reaction is aldehydo-D-ribose 5-phosphate = D-ribulose 5-phosphate. It functions in the pathway carbohydrate degradation; pentose phosphate pathway; D-ribose 5-phosphate from D-ribulose 5-phosphate (non-oxidative stage): step 1/1. In terms of biological role, catalyzes the reversible conversion of ribose-5-phosphate to ribulose 5-phosphate. In Methanosarcina acetivorans (strain ATCC 35395 / DSM 2834 / JCM 12185 / C2A), this protein is Ribose-5-phosphate isomerase A.